We begin with the raw amino-acid sequence, 174 residues long: Endoribonuclease YbeY (174 aa).

3 residues coordinate Zn(2+): histidine 129, histidine 133, and histidine 139.

Belongs to the endoribonuclease YbeY family. It depends on Zn(2+) as a cofactor.

It is found in the cytoplasm. Single strand-specific metallo-endoribonuclease involved in late-stage 70S ribosome quality control and in maturation of the 3' terminus of the 16S rRNA. The sequence is that of Endoribonuclease YbeY from Lactobacillus delbrueckii subsp. bulgaricus (strain ATCC 11842 / DSM 20081 / BCRC 10696 / JCM 1002 / NBRC 13953 / NCIMB 11778 / NCTC 12712 / WDCM 00102 / Lb 14).